A 177-amino-acid chain; its full sequence is Outer membrane lipoprotein Blc (177 aa).

Residues 1 to 18 form the signal peptide; it reads MRILPVVAAVTAAFLVVA. Cysteine 19 carries N-palmitoyl cysteine lipidation. Cysteine 19 carries S-diacylglycerol cysteine lipidation.

This sequence belongs to the calycin superfamily. Lipocalin family. In terms of assembly, homodimer.

It localises to the cell outer membrane. Its function is as follows. Involved in the storage or transport of lipids necessary for membrane maintenance under stressful conditions. Displays a binding preference for lysophospholipids. The chain is Outer membrane lipoprotein Blc from Citrobacter freundii.